The chain runs to 205 residues: 3-demethoxyubiquinol 3-hydroxylase (205 aa).

6 residues coordinate Fe cation: Glu54, Glu84, His87, Glu136, Glu168, and His171.

Belongs to the COQ7 family. The cofactor is Fe cation.

It localises to the cell membrane. It catalyses the reaction a 5-methoxy-2-methyl-3-(all-trans-polyprenyl)benzene-1,4-diol + AH2 + O2 = a 3-demethylubiquinol + A + H2O. It participates in cofactor biosynthesis; ubiquinone biosynthesis. Functionally, catalyzes the hydroxylation of 2-nonaprenyl-3-methyl-6-methoxy-1,4-benzoquinol during ubiquinone biosynthesis. The sequence is that of 3-demethoxyubiquinol 3-hydroxylase from Delftia acidovorans (strain DSM 14801 / SPH-1).